Reading from the N-terminus, the 128-residue chain is Saitohin (128 aa).

The segment at 77–128 (SYSSEESSRNGAEQGRQLSIEGPFQGQNCPSHPAAALPLPMRGESQATSCQV) is disordered.

In terms of assembly, interacts with PRDX6. As to expression, highest expression in placenta, muscle, fetal brain, and adult brain, with lower expression in heart, kidney, stomach, testis, and adrenal gland. In the central nervous system, highest expression is in temporal lobe, hypothalamus, medulla and spinal cord, with lower expression in other brain regions.

It localises to the cytoplasm. The protein localises to the nucleus. This is Saitohin (STH) from Homo sapiens (Human).